The following is an 855-amino-acid chain: Valine--tRNA ligase (855 aa).

A 'HIGH' region motif is present at residues 42 to 52 (PTISGKLHIGH). The short motif at 574-578 (KMSKS) is the 'KMSKS' region element. Lys577 contacts ATP.

Belongs to the class-I aminoacyl-tRNA synthetase family. ValS type 2 subfamily. Monomer.

It localises to the cytoplasm. The enzyme catalyses tRNA(Val) + L-valine + ATP = L-valyl-tRNA(Val) + AMP + diphosphate. Its function is as follows. Catalyzes the attachment of valine to tRNA(Val). As ValRS can inadvertently accommodate and process structurally similar amino acids such as threonine, to avoid such errors, it has a 'posttransfer' editing activity that hydrolyzes mischarged Thr-tRNA(Val) in a tRNA-dependent manner. The polypeptide is Valine--tRNA ligase (Wolbachia sp. subsp. Brugia malayi (strain TRS)).